The chain runs to 34 residues: Cycloamanide B proprotein (34 aa).

A propeptide spanning residues 1–10 is cleaved from the precursor; sequence MSDINAARLP. A cross-link (cyclopeptide (Ser-Pro)) is located at residues 11-17; that stretch reads SFFFPIP. A propeptide spanning residues 18–34 is cleaved from the precursor; that stretch reads CISDDIEMVLTRGESLC.

Belongs to the MSDIN fungal toxin family. In terms of processing, processed by the macrocyclase-peptidase enzyme POPB to yield a cyclic decapeptide. POPB first removes 10 residues from the N-terminus. Conformational trapping of the remaining peptide forces the enzyme to release this intermediate rather than proceed to macrocyclization. The enzyme rebinds the remaining peptide in a different conformation and catalyzes macrocyclization of the N-terminal 7 residues.

In terms of biological role, cyclic heptapeptide that belongs to the MSDIN-like toxin family responsible for a large number of food poisoning cases and deaths. Cycloaminide B is non-toxic to mammals but shows immunosuppressive activity, probably through the inhibition of the action of interleukin-1 and interleukin-2. This chain is Cycloamanide B proprotein, found in Amanita phalloides (Death cap).